Consider the following 524-residue polypeptide: Cytochrome P450 1A1 (524 aa).

The mitochondrial targeting signal stretch occupies residues 33–44; the sequence is LRTQVPKGLKTP. O-linked (GlcNAc) serine glycosylation occurs at serine 71. Phenylalanine 228 contacts substrate. Position 461 (cysteine 461) interacts with heme.

Belongs to the cytochrome P450 family. In terms of assembly, interacts with cytosolic chaperones HSP70 and HSP90; this interaction is required for initial targeting to mitochondria. Interacts (via mitochondrial targeting signal) with TOMM40 (via N-terminus); this interaction is required for translocation across the mitochondrial outer membrane. Heme serves as cofactor.

Its subcellular location is the endoplasmic reticulum membrane. The protein localises to the mitochondrion inner membrane. The protein resides in the microsome membrane. It localises to the cytoplasm. The catalysed reaction is an organic molecule + reduced [NADPH--hemoprotein reductase] + O2 = an alcohol + oxidized [NADPH--hemoprotein reductase] + H2O + H(+). It catalyses the reaction estrone + reduced [NADPH--hemoprotein reductase] + O2 = 2-hydroxyestrone + oxidized [NADPH--hemoprotein reductase] + H2O + H(+). It carries out the reaction estrone + reduced [NADPH--hemoprotein reductase] + O2 = 4-hydroxyestrone + oxidized [NADPH--hemoprotein reductase] + H2O + H(+). The enzyme catalyses estrone + reduced [NADPH--hemoprotein reductase] + O2 = 6alpha-hydroxyestrone + oxidized [NADPH--hemoprotein reductase] + H2O + H(+). The catalysed reaction is estrone + reduced [NADPH--hemoprotein reductase] + O2 = 15alpha-hydroxyestrone + oxidized [NADPH--hemoprotein reductase] + H2O + H(+). It catalyses the reaction estrone + reduced [NADPH--hemoprotein reductase] + O2 = 16alpha-hydroxyestrone + oxidized [NADPH--hemoprotein reductase] + H2O + H(+). It carries out the reaction 17beta-estradiol + reduced [NADPH--hemoprotein reductase] + O2 = 2-hydroxy-17beta-estradiol + oxidized [NADPH--hemoprotein reductase] + H2O + H(+). The enzyme catalyses 17beta-estradiol + reduced [NADPH--hemoprotein reductase] + O2 = 4-hydroxy-17beta-estradiol + oxidized [NADPH--hemoprotein reductase] + H2O + H(+). The catalysed reaction is 17beta-estradiol + reduced [NADPH--hemoprotein reductase] + O2 = 6alpha-hydroxy-17beta-estradiol + oxidized [NADPH--hemoprotein reductase] + H2O + H(+). It catalyses the reaction 17beta-estradiol + reduced [NADPH--hemoprotein reductase] + O2 = 7alpha-hydroxy-17beta-estradiol + oxidized [NADPH--hemoprotein reductase] + H2O + H(+). It carries out the reaction 17beta-estradiol + reduced [NADPH--hemoprotein reductase] + O2 = 15alpha-hydroxy-17beta-estradiol + oxidized [NADPH--hemoprotein reductase] + H2O + H(+). The enzyme catalyses (5Z,8Z,11Z)-eicosatrienoate + reduced [NADPH--hemoprotein reductase] + O2 = 19-hydroxy-(5Z,8Z,11Z)-eicosatrienoate + oxidized [NADPH--hemoprotein reductase] + H2O + H(+). The catalysed reaction is (5Z,8Z,11Z,14Z)-eicosatetraenoate + reduced [NADPH--hemoprotein reductase] + O2 = 16-hydroxy-(5Z,8Z,11Z,14Z)-eicosatetraenoate + oxidized [NADPH--hemoprotein reductase] + H2O + H(+). It catalyses the reaction (5Z,8Z,11Z,14Z)-eicosatetraenoate + reduced [NADPH--hemoprotein reductase] + O2 = 17-hydroxy-(5Z,8Z,11Z,14Z)-eicosatetraenoate + oxidized [NADPH--hemoprotein reductase] + H2O + H(+). It carries out the reaction (5Z,8Z,11Z,14Z)-eicosatetraenoate + reduced [NADPH--hemoprotein reductase] + O2 = 18-hydroxy-(5Z,8Z,11Z,14Z)-eicosatetraenoate + oxidized [NADPH--hemoprotein reductase] + H2O + H(+). The enzyme catalyses (5Z,8Z,11Z,14Z)-eicosatetraenoate + reduced [NADPH--hemoprotein reductase] + O2 = 19-hydroxy-(5Z,8Z,11Z,14Z)-eicosatetraenoate + oxidized [NADPH--hemoprotein reductase] + H2O + H(+). The catalysed reaction is (5Z,8Z,11Z,14Z,17Z)-eicosapentaenoate + reduced [NADPH--hemoprotein reductase] + O2 = 19-hydroxy-(5Z,8Z,11Z,14Z,17Z)-eicosapentaenoate + oxidized [NADPH--hemoprotein reductase] + H2O + H(+). It catalyses the reaction (5Z,8Z,11Z,14Z)-eicosatetraenoate + reduced [NADPH--hemoprotein reductase] + O2 = (8R,9S)-epoxy-(5Z,11Z,14Z)-eicosatrienoate + oxidized [NADPH--hemoprotein reductase] + H2O + H(+). It carries out the reaction (5Z,8Z,11Z,14Z)-eicosatetraenoate + reduced [NADPH--hemoprotein reductase] + O2 = (11R,12S)-epoxy-(5Z,8Z,14Z)-eicosatrienoate + oxidized [NADPH--hemoprotein reductase] + H2O + H(+). The enzyme catalyses (5Z,8Z,11Z,14Z)-eicosatetraenoate + reduced [NADPH--hemoprotein reductase] + O2 = (14S,15R)-epoxy-(5Z,8Z,11Z)-eicosatrienoate + oxidized [NADPH--hemoprotein reductase] + H2O + H(+). The catalysed reaction is (5Z,8Z,11Z,14Z)-eicosatetraenoate + reduced [NADPH--hemoprotein reductase] + O2 = (14R,15S)-epoxy-(5Z,8Z,11Z)-eicosatrienoate + oxidized [NADPH--hemoprotein reductase] + H2O + H(+). It catalyses the reaction (5Z,8Z,11Z,14Z,17Z)-eicosapentaenoate + reduced [NADPH--hemoprotein reductase] + O2 = (17R,18S)-epoxy-(5Z,8Z,11Z,14Z)-eicosatetraenoate + oxidized [NADPH--hemoprotein reductase] + H2O + H(+). It carries out the reaction (4Z,7Z,10Z,13Z,16Z,19Z)-docosahexaenoate + reduced [NADPH--hemoprotein reductase] + O2 = (19S,20R)-epoxy-(4Z,7Z,10Z,13Z,16Z)-docosapentaenoate + oxidized [NADPH--hemoprotein reductase] + H2O + H(+). The enzyme catalyses (4Z,7Z,10Z,13Z,16Z,19Z)-docosahexaenoate + reduced [NADPH--hemoprotein reductase] + O2 = (19R,20S)-epoxy-(4Z,7Z,10Z,13Z,16Z)-docosapentaenoate + oxidized [NADPH--hemoprotein reductase] + H2O + H(+). The catalysed reaction is all-trans-retinol + reduced [NADPH--hemoprotein reductase] + O2 = all-trans-retinal + oxidized [NADPH--hemoprotein reductase] + 2 H2O + H(+). It catalyses the reaction all-trans-retinal + reduced [NADPH--hemoprotein reductase] + O2 = all-trans-retinoate + oxidized [NADPH--hemoprotein reductase] + H2O + 2 H(+). It carries out the reaction (13S)-hydroperoxy-(9Z,11E)-octadecadienoate = 13-oxo-(9Z,11E)-octadecadienoate + H2O. The enzyme catalyses (12S)-hydroperoxy-(5Z,8Z,10E,14Z)-eicosatetraenoate = 12-oxo-(5Z,8Z,10E,14Z)-eicosatetraenoate + H2O. The catalysed reaction is (15S)-hydroperoxy-(5Z,8Z,11Z,13E)-eicosatetraenoate = 15-oxo-(5Z,8Z,11Z,13E)-eicosatetraenoate + H2O. It catalyses the reaction (5S)-hydroperoxy-(6E,8Z,11Z,14Z)-eicosatetraenoate = 5-oxo-(6E,8Z,11Z,14Z)-eicosatetraenoate + H2O. The protein operates within steroid hormone biosynthesis. It participates in lipid metabolism; fatty acid metabolism. It functions in the pathway cofactor metabolism; retinol metabolism. In terms of biological role, a cytochrome P450 monooxygenase involved in the metabolism of various endogenous substrates, including fatty acids, steroid hormones and vitamins. Mechanistically, uses molecular oxygen inserting one oxygen atom into a substrate, and reducing the second into a water molecule, with two electrons provided by NADPH via cytochrome P450 reductase (CPR; NADPH-ferrihemoprotein reductase). Catalyzes the hydroxylation of carbon-hydrogen bonds. Exhibits high catalytic activity for the formation of hydroxyestrogens from estrone (E1) and 17beta-estradiol (E2), namely 2-hydroxy E1 and E2, as well as D-ring hydroxylated E1 and E2 at the C15alpha and C16alpha positions. Displays different regioselectivities for polyunsaturated fatty acids (PUFA) hydroxylation. Catalyzes the epoxidation of double bonds of certain PUFA. Converts arachidonic acid toward epoxyeicosatrienoic acid (EET) regioisomers, 8,9-, 11,12-, and 14,15-EET, that function as lipid mediators in the vascular system. Displays an absolute stereoselectivity in the epoxidation of eicosapentaenoic acid (EPA) producing the 17(R),18(S) enantiomer. May play an important role in all-trans retinoic acid biosynthesis in extrahepatic tissues. Catalyzes two successive oxidative transformation of all-trans retinol to all-trans retinal and then to the active form all-trans retinoic acid. May also participate in eicosanoids metabolism by converting hydroperoxide species into oxo metabolites (lipoxygenase-like reaction, NADPH-independent). The chain is Cytochrome P450 1A1 (CYP1A1) from Mesocricetus auratus (Golden hamster).